A 116-amino-acid chain; its full sequence is Ribosome-binding factor A (116 aa).

This sequence belongs to the RbfA family. As to quaternary structure, monomer. Binds 30S ribosomal subunits, but not 50S ribosomal subunits or 70S ribosomes.

It localises to the cytoplasm. Its function is as follows. One of several proteins that assist in the late maturation steps of the functional core of the 30S ribosomal subunit. Associates with free 30S ribosomal subunits (but not with 30S subunits that are part of 70S ribosomes or polysomes). Required for efficient processing of 16S rRNA. May interact with the 5'-terminal helix region of 16S rRNA. The protein is Ribosome-binding factor A of Streptococcus pneumoniae (strain ATCC 700669 / Spain 23F-1).